The following is a 100-amino-acid chain: Large ribosomal subunit protein eL21 (100 aa).

The segment covering 1-21 has biased composition (basic residues); the sequence is MVKRTHGYRYKSRKLLRKKPR. The segment at 1–22 is disordered; it reads MVKRTHGYRYKSRKLLRKKPRE.

This sequence belongs to the eukaryotic ribosomal protein eL21 family.

In Pyrobaculum neutrophilum (strain DSM 2338 / JCM 9278 / NBRC 100436 / V24Sta) (Thermoproteus neutrophilus), this protein is Large ribosomal subunit protein eL21.